The primary structure comprises 330 residues: Ketol-acid reductoisomerase (NADP(+)) (330 aa).

Residues 1–181 (MNIYYEQDAD…GGTKAGVIET (181 aa)) form the KARI N-terminal Rossmann domain. Residues 24–27 (YGSQ), Lys-47, Ser-50, Ser-52, and 82–85 (DQTQ) each bind NADP(+). The active site involves His-107. Gly-133 contacts NADP(+). In terms of domain architecture, KARI C-terminal knotted spans 182-327 (SFKDETETDL…AKLRGMMSWL (146 aa)). Residues Asp-190, Glu-194, Glu-226, and Glu-230 each contribute to the Mg(2+) site. Ser-251 contributes to the substrate binding site.

This sequence belongs to the ketol-acid reductoisomerase family. The cofactor is Mg(2+).

The enzyme catalyses (2R)-2,3-dihydroxy-3-methylbutanoate + NADP(+) = (2S)-2-acetolactate + NADPH + H(+). It catalyses the reaction (2R,3R)-2,3-dihydroxy-3-methylpentanoate + NADP(+) = (S)-2-ethyl-2-hydroxy-3-oxobutanoate + NADPH + H(+). Its pathway is amino-acid biosynthesis; L-isoleucine biosynthesis; L-isoleucine from 2-oxobutanoate: step 2/4. It participates in amino-acid biosynthesis; L-valine biosynthesis; L-valine from pyruvate: step 2/4. Its function is as follows. Involved in the biosynthesis of branched-chain amino acids (BCAA). Catalyzes an alkyl-migration followed by a ketol-acid reduction of (S)-2-acetolactate (S2AL) to yield (R)-2,3-dihydroxy-isovalerate. In the isomerase reaction, S2AL is rearranged via a Mg-dependent methyl migration to produce 3-hydroxy-3-methyl-2-ketobutyrate (HMKB). In the reductase reaction, this 2-ketoacid undergoes a metal-dependent reduction by NADPH to yield (R)-2,3-dihydroxy-isovalerate. This is Ketol-acid reductoisomerase (NADP(+)) from Chlorobaculum tepidum (strain ATCC 49652 / DSM 12025 / NBRC 103806 / TLS) (Chlorobium tepidum).